Here is a 202-residue protein sequence, read N- to C-terminus: Interleukin-17D (202 aa).

Positions 1–15 (MLVAGFLLALPPSWA) are cleaved as a signal peptide. Positions 65–85 (QARNASCPAGGRPADRRFRPP) are disordered. Asn68 and Asn181 each carry an N-linked (GlcNAc...) asparagine glycan.

This sequence belongs to the IL-17 family. As to expression, expressed preferentially in adipose, skeletal muscle and CNS.

It is found in the secreted. Functionally, induces expression of IL6, CXCL8/IL8, and CSF2/GM-CSF from endothelial cells. In Homo sapiens (Human), this protein is Interleukin-17D (IL17D).